The following is a 616-amino-acid chain: UPF0329 protein ECU02_1540 (616 aa).

Composition is skewed to basic and acidic residues over residues 350-359 (EREKREESKG) and 369-381 (GAGE…KEED). Residues 350 to 427 (EREKREESKG…RKGDGHHYKI (78 aa)) are disordered. Residues 382 to 396 (GKEEEGVEAEEEESA) show a composition bias toward acidic residues. Basic residues predominate over residues 408–427 (ARRKKSLKGKRKGDGHHYKI).

It belongs to the UPF0329 family.

The sequence is that of UPF0329 protein ECU02_1540 from Encephalitozoon cuniculi (strain GB-M1) (Microsporidian parasite).